The primary structure comprises 114 residues: Evasin P1096 (114 aa).

An N-terminal signal peptide occupies residues 1-23; that stretch reads MELNAFTILHIAVFIAVGYYANT. Intrachain disulfides connect C47–C65, C51–C67, and C61–C78. A glycan (N-linked (GlcNAc...) asparagine) is linked at N50. The segment at 89-114 is disordered; it reads DPSQDPSIDEAAPRESVSKRRSNGES. Positions 99–114 are enriched in basic and acidic residues; that stretch reads AAPRESVSKRRSNGES.

It is found in the secreted. Its function is as follows. Salivary chemokine-binding protein which binds to host chemokine CXCL8. The protein is Evasin P1096 of Ixodes ricinus (Common tick).